The primary structure comprises 304 residues: Acetyl-coenzyme A carboxylase carboxyl transferase subunit beta (304 aa).

One can recognise a CoA carboxyltransferase N-terminal domain in the interval 23–292 (VWTKCDSCGQ…PNPEAPREGV (270 aa)). Cys27, Cys30, Cys46, and Cys49 together coordinate Zn(2+). Residues 27 to 49 (CDSCGQVLYRAELERNLEVCPKC) form a C4-type zinc finger. Residues 284 to 304 (NPEAPREGVVVPPVPDQEPEA) are disordered. The segment covering 295 to 304 (PPVPDQEPEA) has biased composition (pro residues).

It belongs to the AccD/PCCB family. Acetyl-CoA carboxylase is a heterohexamer composed of biotin carboxyl carrier protein (AccB), biotin carboxylase (AccC) and two subunits each of ACCase subunit alpha (AccA) and ACCase subunit beta (AccD). The cofactor is Zn(2+).

Its subcellular location is the cytoplasm. The catalysed reaction is N(6)-carboxybiotinyl-L-lysyl-[protein] + acetyl-CoA = N(6)-biotinyl-L-lysyl-[protein] + malonyl-CoA. The protein operates within lipid metabolism; malonyl-CoA biosynthesis; malonyl-CoA from acetyl-CoA: step 1/1. Component of the acetyl coenzyme A carboxylase (ACC) complex. Biotin carboxylase (BC) catalyzes the carboxylation of biotin on its carrier protein (BCCP) and then the CO(2) group is transferred by the transcarboxylase to acetyl-CoA to form malonyl-CoA. The polypeptide is Acetyl-coenzyme A carboxylase carboxyl transferase subunit beta (Escherichia coli O6:K15:H31 (strain 536 / UPEC)).